The chain runs to 272 residues: MARLAAFDMDGTLLMPDHHLGRETIATLSRLRERDITLTFATGRHVLEMRHILGTLSLDAYLITGNGTRIHSLEGDVLHRQDLDPQVADTVMHHAWDTRASMHVFNDNGWFTGQEIPALLQAHVYSGFRYQVIDIKSIPAHQVTKICFCGDHDDLIRLRIQLNEALEERAHLCFSAVDCLEVLPLGGNKGSALAVLSNHLGLSLADCMAFGDAMNDREMLGSVGRGLIMGNAMPQLIAALPHLSVIGHCGNQAVSHFLTHWLDNPHLPYSPE.

Asp-8 (nucleophile) is an active-site residue. Residues Asp-8, Asp-10, and Asp-212 each coordinate Mg(2+).

It belongs to the HAD-like hydrolase superfamily. Cof family. The cofactor is Mg(2+).

It carries out the reaction 4-amino-2-methyl-5-(diphosphooxymethyl)pyrimidine + H2O = 4-amino-2-methyl-5-(phosphooxymethyl)pyrimidine + phosphate + H(+). Functionally, catalyzes the hydrolysis of 4-amino-2-methyl-5-hydroxymethylpyrimidine pyrophosphate (HMP-PP) to 4-amino-2-methyl-5-hydroxymethylpyrimidine phosphate (HMP-P). This is HMP-PP phosphatase from Salmonella choleraesuis (strain SC-B67).